We begin with the raw amino-acid sequence, 1013 residues long: MDIS1-interacting receptor like kinase 1 (1013 aa).

Positions 1 to 23 (MKMKIIVLFLYYCYIGSTSSVLA) are cleaved as a signal peptide. The Extracellular segment spans residues 24–633 (SIDNVNELSV…SSHSSLHGKR (610 aa)). 7 N-linked (GlcNAc...) asparagine glycosylation sites follow: N61, N82, N101, N137, N146, N151, and N155. 22 LRR repeats span residues 70–94 (NGNV…ISQL), 95–117 (SSLV…SIPP), 119–137 (KSID…LFSN), 139–163 (SLGL…LGNL), 164–186 (VSLE…SFKN), 187–213 (LQKL…QLPS), 215–234 (ETAI…EFGN), 235–259 (INSL…LGKL), 260–283 (KSLE…IGSI), 284–307 (TTLK…ITKL), 308–331 (KNLQ…ISSL), 333–355 (QLQV…LGKN), 357–379 (PLQW…LCNK), 381–403 (NLTK…LSTC), 405–426 (SLVR…GFGK), 427–451 (LEKL…ISDS), 453–475 (SLSF…ILSI), 477–498 (NLQA…QFQD), 499–523 (CPSL…IASC), 525–547 (KLVS…ITTM), 548–571 (SALA…IGTS), and 573–595 (ALEL…GFLK). The N-linked (GlcNAc...) asparagine glycan is linked to N199. N271 is a glycosylation site (N-linked (GlcNAc...) asparagine). Residue N341 is glycosylated (N-linked (GlcNAc...) asparagine). N-linked (GlcNAc...) asparagine glycosylation is found at N381, N389, and N417. N-linked (GlcNAc...) asparagine glycans are attached at residues N535, N557, and N578. A helical transmembrane segment spans residues 634–654 (IVAGWLIGIASVLALGILTIV). Over 655 to 1013 (TRTLYKKWYS…FSTSPVNGLL (359 aa)) the chain is Cytoplasmic. T691 is subject to Phosphothreonine. A Protein kinase domain is found at 699 to 983 (IKESNMIGMG…SMLGEAKPRR (285 aa)). ATP contacts are provided by residues 705–713 (IGMGATGIV) and K728. T710 bears the Phosphothreonine; by autocatalysis mark. Phosphothreonine; by autocatalysis occurs at positions 741 and 742. 2 positions are modified to phosphotyrosine: Y777 and Y818. Catalysis depends on D831, which acts as the Proton acceptor. T862 is subject to Phosphothreonine; by autocatalysis. The residue at position 864 (S864) is a Phosphoserine; by autocatalysis. A Phosphotyrosine modification is found at Y872. The residue at position 879 (Y879) is a Phosphotyrosine; by autocatalysis. Phosphothreonine; by autocatalysis occurs at positions 880 and 992. The disordered stretch occupies residues 976-1013 (LGEAKPRRKSNSNEENTSRSLAEKHSSVFSTSPVNGLL). Over residues 1002–1013 (SVFSTSPVNGLL) the composition is skewed to polar residues.

This sequence belongs to the protein kinase superfamily. Ser/Thr protein kinase family. Homodimer. Interacts with MDIS1 and LURE1.2. In terms of processing, autophosphorylation induced by the interaction with LURE1.2. Expressed in pollen tubes.

Its subcellular location is the cell membrane. The enzyme catalyses L-seryl-[protein] + ATP = O-phospho-L-seryl-[protein] + ADP + H(+). It catalyses the reaction L-threonyl-[protein] + ATP = O-phospho-L-threonyl-[protein] + ADP + H(+). In terms of biological role, involved in the regulation of procambium maintenance and polarity during vascular-tissue development. Involved in the pollen tube perception of the female signal. Phosphorylates MDSI1. The protein is MDIS1-interacting receptor like kinase 1 of Arabidopsis thaliana (Mouse-ear cress).